A 288-amino-acid polypeptide reads, in one-letter code: MAAKIIDGKTIAQQVRSEVAEKVKARVAAGKRAPGLAVVLVGSNPASQIYVGSKRKACEEVGFVSRSYDLPETTSEAELLELIDTLNADKTIDGILVQLPLPAGIDNVKVLERIAPDKDVDGFHPYNVGRLCQRAPRLRPCTPRGIVTLLERYNIDTYGLNAVVIGASNIVGRPMSMELLLAGCTTTVTHRFTKNLRHHVENADLLIVAVGKPGFIPGEWIKEGAIVVDVGINRLESGKVVGDVVYEDAAERASYITPVPGGVGPMTVATLIQNTLQACEEYHDVEEA.

NADP(+) is bound by residues 166-168 and Ile-232; that span reads GAS.

This sequence belongs to the tetrahydrofolate dehydrogenase/cyclohydrolase family. Homodimer.

It catalyses the reaction (6R)-5,10-methylene-5,6,7,8-tetrahydrofolate + NADP(+) = (6R)-5,10-methenyltetrahydrofolate + NADPH. The catalysed reaction is (6R)-5,10-methenyltetrahydrofolate + H2O = (6R)-10-formyltetrahydrofolate + H(+). Its pathway is one-carbon metabolism; tetrahydrofolate interconversion. In terms of biological role, catalyzes the oxidation of 5,10-methylenetetrahydrofolate to 5,10-methenyltetrahydrofolate and then the hydrolysis of 5,10-methenyltetrahydrofolate to 10-formyltetrahydrofolate. This Klebsiella pneumoniae (strain 342) protein is Bifunctional protein FolD.